We begin with the raw amino-acid sequence, 344 residues long: Nicotinate-nucleotide--dimethylbenzimidazole phosphoribosyltransferase (344 aa).

Residue E310 is the Proton acceptor of the active site.

This sequence belongs to the CobT family.

The enzyme catalyses 5,6-dimethylbenzimidazole + nicotinate beta-D-ribonucleotide = alpha-ribazole 5'-phosphate + nicotinate + H(+). The protein operates within nucleoside biosynthesis; alpha-ribazole biosynthesis; alpha-ribazole from 5,6-dimethylbenzimidazole: step 1/2. In terms of biological role, catalyzes the synthesis of alpha-ribazole-5'-phosphate from nicotinate mononucleotide (NAMN) and 5,6-dimethylbenzimidazole (DMB). The sequence is that of Nicotinate-nucleotide--dimethylbenzimidazole phosphoribosyltransferase from Shewanella amazonensis (strain ATCC BAA-1098 / SB2B).